Here is a 296-residue protein sequence, read N- to C-terminus: Phosphatidylcholine:diacylglycerol cholinephosphotransferase 2 (296 aa).

A run of 5 helical transmembrane segments spans residues 83-103 (HWIP…EYTF), 136-156 (VLAA…GCTW), 165-182 (TIAA…GYST), 198-218 (PVGN…SMIA), and 250-270 (GHYT…DSLA). Active-site residues include histidine 211, histidine 251, and aspartate 255.

This sequence belongs to the phosphatidylcholine:diacylglycerol cholinephosphotransferase family.

The protein localises to the membrane. Functionally, functions as a phosphatidylcholine:diacylglycerol cholinephosphotransferase that catalyzes the transfer of the phosphocholine headgroup from phosphatidylcholine (PC) to diacylglycerol, a major reaction for the transfer of 18:1 into phosphatidylcholine for desaturation and also for the reverse transfer of 18:2 and 18:3 into the triacylglycerols synthesis pathway. In Arabidopsis thaliana (Mouse-ear cress), this protein is Phosphatidylcholine:diacylglycerol cholinephosphotransferase 2.